Reading from the N-terminus, the 292-residue chain is 4-hydroxy-tetrahydrodipicolinate synthase (292 aa).

Pyruvate is bound at residue threonine 45. Tyrosine 133 functions as the Proton donor/acceptor in the catalytic mechanism. Residue lysine 161 is the Schiff-base intermediate with substrate of the active site. Isoleucine 203 serves as a coordination point for pyruvate.

The protein belongs to the DapA family. As to quaternary structure, homotetramer; dimer of dimers.

The protein localises to the cytoplasm. It carries out the reaction L-aspartate 4-semialdehyde + pyruvate = (2S,4S)-4-hydroxy-2,3,4,5-tetrahydrodipicolinate + H2O + H(+). The protein operates within amino-acid biosynthesis; L-lysine biosynthesis via DAP pathway; (S)-tetrahydrodipicolinate from L-aspartate: step 3/4. Catalyzes the condensation of (S)-aspartate-beta-semialdehyde [(S)-ASA] and pyruvate to 4-hydroxy-tetrahydrodipicolinate (HTPA). In Azoarcus sp. (strain BH72), this protein is 4-hydroxy-tetrahydrodipicolinate synthase.